We begin with the raw amino-acid sequence, 48 residues long: MRKKVVLSCEECKNRNYSTMKDTSSVERLEIKKFCKTCNQHTVHKETK.

This sequence belongs to the bacterial ribosomal protein bL33 family.

This is Large ribosomal subunit protein bL33A from Bacillus anthracis.